We begin with the raw amino-acid sequence, 316 residues long: Pantothenate kinase (316 aa).

Residue 95-102 participates in ATP binding; the sequence is GSVAVGKS.

This sequence belongs to the prokaryotic pantothenate kinase family.

Its subcellular location is the cytoplasm. The catalysed reaction is (R)-pantothenate + ATP = (R)-4'-phosphopantothenate + ADP + H(+). It participates in cofactor biosynthesis; coenzyme A biosynthesis; CoA from (R)-pantothenate: step 1/5. This Klebsiella pneumoniae (strain 342) protein is Pantothenate kinase.